Reading from the N-terminus, the 95-residue chain is uncharacterized protein (95 aa).

The disordered stretch occupies residues 46 to 68 (GDRGTNGRTEAEHDGIPHSRKKV).

This is an uncharacterized protein from Schizosaccharomyces pombe (strain 972 / ATCC 24843) (Fission yeast).